Consider the following 362-residue polypeptide: NAD(P)H-quinone oxidoreductase subunit 1, chloroplastic (362 aa).

7 helical membrane passes run 26–48 (LIWI…VIVW), 97–119 (FSIG…PLGY), 126–148 (LSIG…LMAG), 163–185 (AAAQ…SLLS), 254–276 (LFYL…LYLG), 296–318 (IIGI…LFLF), and 338–360 (LGWK…FQLV).

It belongs to the complex I subunit 1 family. NDH is composed of at least 16 different subunits, 5 of which are encoded in the nucleus.

It localises to the plastid. The protein resides in the chloroplast thylakoid membrane. It catalyses the reaction a plastoquinone + NADH + (n+1) H(+)(in) = a plastoquinol + NAD(+) + n H(+)(out). The catalysed reaction is a plastoquinone + NADPH + (n+1) H(+)(in) = a plastoquinol + NADP(+) + n H(+)(out). NDH shuttles electrons from NAD(P)H:plastoquinone, via FMN and iron-sulfur (Fe-S) centers, to quinones in the photosynthetic chain and possibly in a chloroplast respiratory chain. The immediate electron acceptor for the enzyme in this species is believed to be plastoquinone. Couples the redox reaction to proton translocation, and thus conserves the redox energy in a proton gradient. The polypeptide is NAD(P)H-quinone oxidoreductase subunit 1, chloroplastic (ndhA) (Zea mays (Maize)).